A 64-amino-acid chain; its full sequence is Prokaryotic ubiquitin-like protein Pup (64 aa).

Over residues 1 to 11 (MAQEQTKRGGG) the composition is skewed to basic and acidic residues. A disordered region spans residues 1–37 (MAQEQTKRGGGGDDEDDFASSTAAGQERREKLAEDTD). The tract at residues 21-58 (STAAGQERREKLAEDTDDLLDEIDDVLEENAEDFVRAY) is ARC ATPase binding. Residues 24–52 (AGQERREKLAEDTDDLLDEIDDVLEENAE) are a coiled coil. A Deamidated glutamine modification is found at Q64. An Isoglutamyl lysine isopeptide (Gln-Lys) (interchain with K-? in acceptor proteins) cross-link involves residue Q64.

This sequence belongs to the prokaryotic ubiquitin-like protein family. Strongly interacts with the proteasome-associated ATPase ARC through a hydrophobic interface; the interacting region of Pup lies in its C-terminal half. There is one Pup binding site per ARC hexamer ring. Post-translationally, is modified by deamidation of its C-terminal glutamine to glutamate by the deamidase Dop, a prerequisite to the subsequent pupylation process.

It functions in the pathway protein degradation; proteasomal Pup-dependent pathway. Functionally, protein modifier that is covalently attached to lysine residues of substrate proteins, thereby targeting them for proteasomal degradation. The tagging system is termed pupylation. The chain is Prokaryotic ubiquitin-like protein Pup from Mycolicibacterium paratuberculosis (strain ATCC BAA-968 / K-10) (Mycobacterium paratuberculosis).